The primary structure comprises 228 residues: Probable septum site-determining protein MinC (228 aa).

This sequence belongs to the MinC family. Interacts with MinD and FtsZ.

Cell division inhibitor that blocks the formation of polar Z ring septums. Rapidly oscillates between the poles of the cell to destabilize FtsZ filaments that have formed before they mature into polar Z rings. Prevents FtsZ polymerization. This Oceanobacillus iheyensis (strain DSM 14371 / CIP 107618 / JCM 11309 / KCTC 3954 / HTE831) protein is Probable septum site-determining protein MinC.